The following is a 256-amino-acid chain: UPF0259 membrane protein YPO2199/y2042/YP_1997 (256 aa).

6 consecutive transmembrane segments (helical) span residues 20 to 40 (IAAILLLALLTAFITVMLNQT), 90 to 110 (FSALVGNVLLVGGLLTLIAMV), 118 to 138 (ALQAIGLSLPILPRLLVLMFI), 141 to 161 (LVIQLGLTFFIVPGVAIAIAL), 192 to 212 (LIVPAMMLWIAVKLLLLFLIS), and 221 to 241 (IATIVLSTLSNLASALLLVYL).

This sequence belongs to the UPF0259 family.

The protein resides in the cell inner membrane. The chain is UPF0259 membrane protein YPO2199/y2042/YP_1997 from Yersinia pestis.